Consider the following 640-residue polypeptide: WW domain-binding protein 11 (640 aa).

Residues 1-11 are compositionally biased toward polar residues; that stretch reads MGRRSTSSTKS. The tract at residues 1 to 37 is disordered; the sequence is MGRRSTSSTKSGKFMNPTDQARKEARKRELKKNKKQR. Positions 28 to 37 are enriched in basic residues; sequence RELKKNKKQR. Positions 75 to 122 form a coiled coil; that stretch reads EKVLRDKRKKLRETFERIVRLYERENPETYKELRKLELEYETKRGQLS. Disordered regions lie at residues 155–174, 187–563, and 582–625; these read DIPL…SALG, VPRL…ISAK, and RVRR…LKTK. A compositionally biased stretch (pro residues) spans 194–207; the sequence is RKPPGPPPGPPPPQ. A compositionally biased stretch (basic and acidic residues) spans 230 to 240; it reads DGGRDSDSKSE. The span at 241-251 shows a compositional bias: acidic residues; it reads ADEESDSQEDS. Over residues 252 to 274 the composition is skewed to basic and acidic residues; the sequence is SAEREDSDRGERDEERERADKHT. Phosphoserine is present on serine 285. Acidic residues predominate over residues 315 to 338; sequence PEEEEEDEEEEYSESEDSEAEDQA. A compositionally biased stretch (low complexity) spans 356-371; that stretch reads APMAAQQPPSLMQAPP. Pro residues-rich tracts occupy residues 372-412 and 422-491; these read ITGP…PPGL and RLLP…PPLN. The short motif at 421 to 432 is the PGR element; sequence PRLLPPGPPPGR. Residues 547 to 558 show a composition bias toward gly residues; that stretch reads GSGGASAQGGGA. Over residues 586–599 the composition is skewed to basic and acidic residues; it reads DRAGGTGRREEERP. Low complexity predominate over residues 603–616; sequence QQTPAHQAPPIAHA.

It localises to the cytoplasm. The protein localises to the nucleus. Functionally, activates pre-mRNA splicing. In Danio rerio (Zebrafish), this protein is WW domain-binding protein 11 (wbp11).